The following is a 372-amino-acid chain: N-methyl-L-tryptophan oxidase (372 aa).

FAD is bound at residue 4-34; sequence DLIIIGSGSVGAAAGYYATRAGLNVLMTDAH. Cys308 carries the S-8alpha-FAD cysteine modification.

It belongs to the MSOX/MTOX family. MTOX subfamily. In terms of assembly, monomer. It depends on FAD as a cofactor.

It catalyses the reaction N(alpha)-methyl-L-tryptophan + O2 + H2O = L-tryptophan + formaldehyde + H2O2. Its function is as follows. Catalyzes the oxidative demethylation of N-methyl-L-tryptophan. The polypeptide is N-methyl-L-tryptophan oxidase (Escherichia coli O17:K52:H18 (strain UMN026 / ExPEC)).